We begin with the raw amino-acid sequence, 540 residues long: Chaperonin GroEL (540 aa).

ATP-binding positions include 30-33 (TLGP), Lys-51, 87-91 (DGTTT), Gly-415, and Asp-496.

The protein belongs to the chaperonin (HSP60) family. As to quaternary structure, forms a cylinder of 14 subunits composed of two heptameric rings stacked back-to-back. Interacts with the co-chaperonin GroES.

The protein resides in the cytoplasm. It carries out the reaction ATP + H2O + a folded polypeptide = ADP + phosphate + an unfolded polypeptide.. Together with its co-chaperonin GroES, plays an essential role in assisting protein folding. The GroEL-GroES system forms a nano-cage that allows encapsulation of the non-native substrate proteins and provides a physical environment optimized to promote and accelerate protein folding. The polypeptide is Chaperonin GroEL (Thermodesulfovibrio yellowstonii (strain ATCC 51303 / DSM 11347 / YP87)).